The following is a 318-amino-acid chain: tRNA dimethylallyltransferase (318 aa).

Position 21–28 (21–28 (GPTATGKS)) interacts with ATP. Position 23–28 (23–28 (TATGKS)) interacts with substrate. The segment at 46 to 49 (DSMQ) is interaction with substrate tRNA.

It belongs to the IPP transferase family. As to quaternary structure, monomer. Mg(2+) serves as cofactor.

It carries out the reaction adenosine(37) in tRNA + dimethylallyl diphosphate = N(6)-dimethylallyladenosine(37) in tRNA + diphosphate. Catalyzes the transfer of a dimethylallyl group onto the adenine at position 37 in tRNAs that read codons beginning with uridine, leading to the formation of N6-(dimethylallyl)adenosine (i(6)A). The chain is tRNA dimethylallyltransferase from Acidothermus cellulolyticus (strain ATCC 43068 / DSM 8971 / 11B).